Reading from the N-terminus, the 125-residue chain is Holo-[acyl-carrier-protein] synthase (125 aa).

2 residues coordinate Mg(2+): Asp-8 and Glu-57.

Belongs to the P-Pant transferase superfamily. AcpS family. It depends on Mg(2+) as a cofactor.

The protein localises to the cytoplasm. It carries out the reaction apo-[ACP] + CoA = holo-[ACP] + adenosine 3',5'-bisphosphate + H(+). In terms of biological role, transfers the 4'-phosphopantetheine moiety from coenzyme A to a Ser of acyl-carrier-protein. This chain is Holo-[acyl-carrier-protein] synthase, found in Nitrosospira multiformis (strain ATCC 25196 / NCIMB 11849 / C 71).